The primary structure comprises 301 residues: Troponin T, cardiac muscle (301 aa).

Composition is skewed to acidic residues over residues 1–42 (MSDL…EEEA) and 50–74 (AETE…DGPV). 2 disordered regions span residues 1–99 (MSDL…GERV) and 125–223 (ENRK…KKKK). N-acetylserine is present on Ser-2. Ser-2 is subject to Phosphoserine; by CK2. Positions 82–93 (RPFMPNLVPPKI) are enriched in pro residues. 2 stretches are compositionally biased toward basic and acidic residues: residues 125–186 (ENRK…DEAR) and 206–223 (QTER…KKKK). Phosphothreonine; by PKC/PRKCA is present on Thr-207. Phosphoserine; by PKC/PRKCA is present on Ser-211. A Phosphothreonine; by PKC/PRKCA and RAF1 modification is found at Thr-216. Thr-297 carries the post-translational modification Phosphothreonine; by PKC/PRKCA.

This sequence belongs to the troponin T family. Binds with troponins I and C to make the thin-filament regulatory complex, troponin. Post-translationally, phosphorylation at Thr-216 by PRKCA induces significant reduction in myofilament calcium sensitivity and actomyosin ATPase activity. As to expression, the major isoform in adult heart is CTNT4.

Troponin T is the tropomyosin-binding subunit of troponin, the thin filament regulatory complex which confers calcium-sensitivity to striated muscle actomyosin ATPase activity. This is Troponin T, cardiac muscle (TNNT2) from Oryctolagus cuniculus (Rabbit).